A 381-amino-acid polypeptide reads, in one-letter code: Chaperone protein DnaJ (381 aa).

In terms of domain architecture, J spans 4–69; the sequence is DYYEILGVTR…QKRAAYDRFG (66 aa). The CR-type zinc-finger motif lies at 135-213; that stretch reads GKTAQINIPS…CQGTRRVEKN (79 aa). 8 residues coordinate Zn(2+): C148, C151, C165, C168, C187, C190, C201, and C204. CXXCXGXG motif repeat units follow at residues 148–155, 165–172, 187–194, and 201–208; these read CDACEGSG, CGTCHGAG, CPVCHGRG, and CPKCQGTR.

This sequence belongs to the DnaJ family. As to quaternary structure, homodimer. Zn(2+) is required as a cofactor.

The protein localises to the cytoplasm. Its function is as follows. Participates actively in the response to hyperosmotic and heat shock by preventing the aggregation of stress-denatured proteins and by disaggregating proteins, also in an autonomous, DnaK-independent fashion. Unfolded proteins bind initially to DnaJ; upon interaction with the DnaJ-bound protein, DnaK hydrolyzes its bound ATP, resulting in the formation of a stable complex. GrpE releases ADP from DnaK; ATP binding to DnaK triggers the release of the substrate protein, thus completing the reaction cycle. Several rounds of ATP-dependent interactions between DnaJ, DnaK and GrpE are required for fully efficient folding. Also involved, together with DnaK and GrpE, in the DNA replication of plasmids through activation of initiation proteins. The sequence is that of Chaperone protein DnaJ from Bartonella henselae (strain ATCC 49882 / DSM 28221 / CCUG 30454 / Houston 1) (Rochalimaea henselae).